The following is a 37-amino-acid chain: Large ribosomal subunit protein bL36 (37 aa).

It belongs to the bacterial ribosomal protein bL36 family.

The chain is Large ribosomal subunit protein bL36 from Leptothrix cholodnii (strain ATCC 51168 / LMG 8142 / SP-6) (Leptothrix discophora (strain SP-6)).